The following is a 25-amino-acid chain: Bombinin-like peptide 4 (25 aa).

Phenylalanine 25 carries the post-translational modification Phenylalanine amide.

The protein belongs to the bombinin family. Expressed by the skin glands.

It localises to the secreted. Its function is as follows. Has antimicrobial activity, but no hemolytic activity. Preference on killing Gram-negative non-enteric bacteria. The chain is Bombinin-like peptide 4 from Bombina orientalis (Oriental fire-bellied toad).